The chain runs to 250 residues: Probable aquaporin TIP1-1 (250 aa).

A run of 2 helical transmembrane segments spans residues 25–44 and 58–77; these read AEFISTLIFVFAGQGSGMAF and LIAAAVAHAFALFVAVSVGA. The short motif at 85–87 is the NPA 1 element; the sequence is NPA. A run of 3 helical transmembrane segments spans residues 103–121, 144–163, and 170–192; these read GLLYWIAQLLGSTVACFLL, LVLEIVMTFGLVYTVYATAV, and LGTIAPIAIGFIVGANILVGGAF. The short motif at 198–200 is the NPA 2 element; the sequence is NPA. A helical transmembrane segment spans residues 216–233; it reads WVYWVGPLIGGGLAGVIY.

It belongs to the MIP/aquaporin (TC 1.A.8) family. TIP (TC 1.A.8.10) subfamily. As to expression, expressed in roots and leaves.

Its subcellular location is the vacuole membrane. Aquaporins facilitate the transport of water and small neutral solutes across cell membranes. May be involved in transport from the vacuolar compartment to the cytoplasm. The chain is Probable aquaporin TIP1-1 (TIP1-1) from Oryza sativa subsp. japonica (Rice).